The primary structure comprises 276 residues: Acyl-[acyl-carrier-protein]--UDP-N-acetylglucosamine O-acyltransferase (276 aa).

The protein belongs to the transferase hexapeptide repeat family. LpxA subfamily. In terms of assembly, homotrimer.

It is found in the cytoplasm. It catalyses the reaction a (3R)-hydroxyacyl-[ACP] + UDP-N-acetyl-alpha-D-glucosamine = a UDP-3-O-[(3R)-3-hydroxyacyl]-N-acetyl-alpha-D-glucosamine + holo-[ACP]. It functions in the pathway glycolipid biosynthesis; lipid IV(A) biosynthesis; lipid IV(A) from (3R)-3-hydroxytetradecanoyl-[acyl-carrier-protein] and UDP-N-acetyl-alpha-D-glucosamine: step 1/6. Involved in the biosynthesis of lipid A, a phosphorylated glycolipid that anchors the lipopolysaccharide to the outer membrane of the cell. This is Acyl-[acyl-carrier-protein]--UDP-N-acetylglucosamine O-acyltransferase from Rippkaea orientalis (strain PCC 8801 / RF-1) (Cyanothece sp. (strain PCC 8801)).